A 355-amino-acid chain; its full sequence is Isopentenyl-diphosphate delta-isomerase (355 aa).

9–10 (RK) lines the substrate pocket. FMN-binding positions include 67–69 (AIT), Ser-97, and Asn-125. Residue 97-99 (SQR) participates in substrate binding. Gln-161 lines the substrate pocket. A Mg(2+)-binding site is contributed by Glu-162. Residues Lys-197, Thr-227, 276-278 (GIR), and 297-298 (AL) contribute to the FMN site.

This sequence belongs to the IPP isomerase type 2 family. Homooctamer. Dimer of tetramers. The cofactor is FMN. It depends on NADPH as a cofactor. Requires Mg(2+) as cofactor.

It localises to the cytoplasm. It catalyses the reaction isopentenyl diphosphate = dimethylallyl diphosphate. Its function is as follows. Involved in the biosynthesis of isoprenoids. Catalyzes the 1,3-allylic rearrangement of the homoallylic substrate isopentenyl (IPP) to its allylic isomer, dimethylallyl diphosphate (DMAPP). This chain is Isopentenyl-diphosphate delta-isomerase, found in Methanococcus maripaludis (strain DSM 14266 / JCM 13030 / NBRC 101832 / S2 / LL).